The following is a 219-amino-acid chain: Protein-L-isoaspartate O-methyltransferase (219 aa).

S65 is an active-site residue.

Belongs to the methyltransferase superfamily. L-isoaspartyl/D-aspartyl protein methyltransferase family. Monomer.

The protein resides in the cytoplasm. The enzyme catalyses [protein]-L-isoaspartate + S-adenosyl-L-methionine = [protein]-L-isoaspartate alpha-methyl ester + S-adenosyl-L-homocysteine. In terms of biological role, catalyzes the methyl esterification of L-isoaspartyl residues in peptides and proteins that result from spontaneous decomposition of normal L-aspartyl and L-asparaginyl residues. It plays a role in the repair and/or degradation of damaged proteins. This Pyrococcus furiosus (strain ATCC 43587 / DSM 3638 / JCM 8422 / Vc1) protein is Protein-L-isoaspartate O-methyltransferase (pcm).